Here is a 623-residue protein sequence, read N- to C-terminus: Pheromone-processing carboxypeptidase KEX1 (623 aa).

The N-terminal stretch at 1-16 (MLKLLCLLLPLVAVSA) is a signal peptide. Topologically, residues 17–512 (SPIDLGSQKD…TDDSAAHGNP (496 aa)) are lumenal. N-linked (GlcNAc...) asparagine glycosylation is present at N54. The active site involves S177. N-linked (GlcNAc...) asparagine glycosylation is present at N258. D383 is an active-site residue. N430 and N438 each carry an N-linked (GlcNAc...) asparagine glycan. The active site involves H441. N469 and N483 each carry an N-linked (GlcNAc...) asparagine glycan. Residues 513–533 (FFYYVFELFVIVLLLCGLVYL) form a helical membrane-spanning segment. Residues 534-623 (YQYYSNSAPH…EMDSHGTSEK (90 aa)) are Cytoplasmic-facing. The interval 597-623 (QEPYKPLDKGANADLDIEMDSHGTSEK) is disordered.

Belongs to the peptidase S10 family.

The protein resides in the golgi apparatus. It localises to the trans-Golgi network membrane. The enzyme catalyses Preferential release of a C-terminal arginine or lysine residue.. Its function is as follows. Protease with a carboxypeptidase B-like function involved in the C-terminal processing of the lysine and arginine residues from protein precursors. Promotes cell fusion and is involved in the programmed cell death. This is Pheromone-processing carboxypeptidase KEX1 (KEX1) from Komagataella phaffii (strain GS115 / ATCC 20864) (Yeast).